The primary structure comprises 32 residues: Protamine-1 (32 aa).

The interval 1–32 is disordered; that stretch reads PRRRRASSGRPVRRRRRPKMSRRRRRGGRRRR.

Testis.

Its subcellular location is the nucleus. It localises to the chromosome. Its function is as follows. Protamines substitute for histones in the chromatin of sperm during the haploid phase of spermatogenesis. They compact sperm DNA into a highly condensed, stable and inactive complex. The sequence is that of Protamine-1 from Esox lucius (Northern pike).